A 138-amino-acid chain; its full sequence is Large ribosomal subunit protein uL16 (138 aa).

Positions 1-13 (MLQPSRRKYRKEQ) are enriched in basic residues. The interval 1–22 (MLQPSRRKYRKEQKGRNTGLAT) is disordered.

This sequence belongs to the universal ribosomal protein uL16 family. Part of the 50S ribosomal subunit.

Binds 23S rRNA and is also seen to make contacts with the A and possibly P site tRNAs. In Bordetella petrii (strain ATCC BAA-461 / DSM 12804 / CCUG 43448), this protein is Large ribosomal subunit protein uL16.